A 206-amino-acid chain; its full sequence is Large ribosomal subunit protein uL13y (206 aa).

It belongs to the universal ribosomal protein uL13 family.

This is Large ribosomal subunit protein uL13y (RPL13AB) from Arabidopsis thaliana (Mouse-ear cress).